The sequence spans 370 residues: Pantothenate kinase 3 (370 aa).

Glutamate 138 serves as the catalytic Proton acceptor. Residues serine 192, serine 195, and arginine 207 each coordinate acetyl-CoA.

Belongs to the type II pantothenate kinase family. In terms of assembly, homodimer. As to expression, highly expressed in the liver.

The protein localises to the cytoplasm. The catalysed reaction is (R)-pantothenate + ATP = (R)-4'-phosphopantothenate + ADP + H(+). The protein operates within cofactor biosynthesis; coenzyme A biosynthesis; CoA from (R)-pantothenate: step 1/5. Its activity is regulated as follows. Subject to allosteric regulation, exists in two distinct conformational states, a catalytically incompetent (or open) conformation stabilized by the binding of acetyl(acyl)-CoA, and a catalytically competent (or closed) conformation stabilized by ATP-binding. Inhibited by acetyl-CoA and its thioesters which act as allosteric inhibitors and compete with the ATP-binding site. Inhibited by sulfonylureas and thiazolidinediones. Activated by oleoylethanolamide, palmitoyl-carnitine and oleoyl-carnitine. Its function is as follows. Catalyzes the phosphorylation of pantothenate to generate 4'-phosphopantothenate in the first and rate-determining step of coenzyme A (CoA) synthesis. This chain is Pantothenate kinase 3 (PANK3), found in Homo sapiens (Human).